A 324-amino-acid chain; its full sequence is tRNA U34 carboxymethyltransferase (324 aa).

Carboxy-S-adenosyl-L-methionine is bound by residues Lys92, Trp106, Lys111, Gly131, 181–182 (LE), Met197, Tyr201, and Arg316.

This sequence belongs to the class I-like SAM-binding methyltransferase superfamily. CmoB family. As to quaternary structure, homotetramer.

The enzyme catalyses carboxy-S-adenosyl-L-methionine + 5-hydroxyuridine(34) in tRNA = 5-carboxymethoxyuridine(34) in tRNA + S-adenosyl-L-homocysteine + H(+). Catalyzes carboxymethyl transfer from carboxy-S-adenosyl-L-methionine (Cx-SAM) to 5-hydroxyuridine (ho5U) to form 5-carboxymethoxyuridine (cmo5U) at position 34 in tRNAs. This is tRNA U34 carboxymethyltransferase from Syntrophotalea carbinolica (strain DSM 2380 / NBRC 103641 / GraBd1) (Pelobacter carbinolicus).